Reading from the N-terminus, the 588-residue chain is Aspartate--tRNA ligase (588 aa).

E174 serves as a coordination point for L-aspartate. The segment at 198–201 is aspartate; sequence QLFK. Residue R220 participates in L-aspartate binding. ATP contacts are provided by residues 220–222 and Q229; that span reads RDE. H448 is an L-aspartate binding site. Residue E482 participates in ATP binding. R489 contributes to the L-aspartate binding site. ATP is bound at residue 534 to 537; that stretch reads GIDR.

It belongs to the class-II aminoacyl-tRNA synthetase family. Type 1 subfamily. In terms of assembly, homodimer.

The protein resides in the cytoplasm. It carries out the reaction tRNA(Asp) + L-aspartate + ATP = L-aspartyl-tRNA(Asp) + AMP + diphosphate. Catalyzes the attachment of L-aspartate to tRNA(Asp) in a two-step reaction: L-aspartate is first activated by ATP to form Asp-AMP and then transferred to the acceptor end of tRNA(Asp). In Xanthomonas campestris pv. campestris (strain 8004), this protein is Aspartate--tRNA ligase.